The chain runs to 384 residues: S-adenosylmethionine synthase (384 aa).

Residue H16 participates in ATP binding. Position 18 (D18) interacts with Mg(2+). Position 44 (E44) interacts with K(+). 2 residues coordinate L-methionine: E57 and Q100. Residues 100-110 are flexible loop; it reads QSADIAMGVDE. Residues 165–167, D240, 246–247, A263, and K267 each bind ATP; these read DAK and RK. D240 is an L-methionine binding site. K271 contacts L-methionine.

The protein belongs to the AdoMet synthase family. As to quaternary structure, homotetramer; dimer of dimers. It depends on Mg(2+) as a cofactor. K(+) is required as a cofactor.

The protein resides in the cytoplasm. It carries out the reaction L-methionine + ATP + H2O = S-adenosyl-L-methionine + phosphate + diphosphate. It participates in amino-acid biosynthesis; S-adenosyl-L-methionine biosynthesis; S-adenosyl-L-methionine from L-methionine: step 1/1. Its function is as follows. Catalyzes the formation of S-adenosylmethionine (AdoMet) from methionine and ATP. The overall synthetic reaction is composed of two sequential steps, AdoMet formation and the subsequent tripolyphosphate hydrolysis which occurs prior to release of AdoMet from the enzyme. In Cellvibrio japonicus (strain Ueda107) (Pseudomonas fluorescens subsp. cellulosa), this protein is S-adenosylmethionine synthase.